Reading from the N-terminus, the 120-residue chain is NAD(P)H-quinone oxidoreductase subunit 3 (120 aa).

3 helical membrane-spanning segments follow: residues 6 to 26, 64 to 84, and 89 to 109; these read GYDA…LALV, MFAL…PWAV, and LGLL…VALA.

The protein belongs to the complex I subunit 3 family. NDH-1 can be composed of about 15 different subunits; different subcomplexes with different compositions have been identified which probably have different functions.

The protein resides in the cellular thylakoid membrane. The enzyme catalyses a plastoquinone + NADH + (n+1) H(+)(in) = a plastoquinol + NAD(+) + n H(+)(out). It catalyses the reaction a plastoquinone + NADPH + (n+1) H(+)(in) = a plastoquinol + NADP(+) + n H(+)(out). In terms of biological role, NDH-1 shuttles electrons from an unknown electron donor, via FMN and iron-sulfur (Fe-S) centers, to quinones in the respiratory and/or the photosynthetic chain. The immediate electron acceptor for the enzyme in this species is believed to be plastoquinone. Couples the redox reaction to proton translocation, and thus conserves the redox energy in a proton gradient. Cyanobacterial NDH-1 also plays a role in inorganic carbon-concentration. In Prochlorococcus marinus (strain SARG / CCMP1375 / SS120), this protein is NAD(P)H-quinone oxidoreductase subunit 3.